A 179-amino-acid chain; its full sequence is Large ribosomal subunit protein bL27c (179 aa).

The N-terminal 51 residues, 1–51 (MAVSFSLVGAFKGLSLASSSSFLKGDFGAAFPVAPKFSVSFPLKSPLTIES), are a transit peptide targeting the chloroplast.

It belongs to the bacterial ribosomal protein bL27 family. Part of the 50S ribosomal subunit.

It localises to the plastid. It is found in the chloroplast. This chain is Large ribosomal subunit protein bL27c (RPL27), found in Nicotiana tabacum (Common tobacco).